Reading from the N-terminus, the 423-residue chain is Divalent metal cation transporter MntH (423 aa).

11 consecutive transmembrane segments (helical) span residues 31–51, 58–78, 116–136, 137–157, 168–188, 213–233, 254–274, 302–322, 342–362, 363–383, and 401–421; these read LMML…GNFA, SSFG…AMLI, IIAI…FQLV, FGIS…MILI, VVIG…LFFA, AAGI…SALF, IAMV…AAVF, VLFG…GTMA, FITM…TDIL, VMSQ…LLIF, and YAGV…MVTL.

The protein belongs to the NRAMP family.

The protein resides in the cell inner membrane. Its function is as follows. H(+)-stimulated, divalent metal cation uptake system. The protein is Divalent metal cation transporter MntH of Vibrio campbellii (strain ATCC BAA-1116).